Here is a 658-residue protein sequence, read N- to C-terminus: UvrABC system protein B (658 aa).

Residues 25 to 178 (KSLKNNNHYQ…KNFLLKLVEM (154 aa)) enclose the Helicase ATP-binding domain. Position 38-45 (38-45 (GVTGSGKT)) interacts with ATP. Residues 91-114 (HFDYYQPESYIPRRDLFIEKDSSI) carry the Beta-hairpin motif. The Helicase C-terminal domain occupies 433–607 (QVQDLFDEIK…ELKLRDDEIR (175 aa)). One can recognise a UVR domain in the interval 623–658 (EKIIKELDKKMRECAKNLDFEEAMRLRDEIAKLRTL).

The protein belongs to the UvrB family. In terms of assembly, forms a heterotetramer with UvrA during the search for lesions. Interacts with UvrC in an incision complex.

The protein resides in the cytoplasm. In terms of biological role, the UvrABC repair system catalyzes the recognition and processing of DNA lesions. A damage recognition complex composed of 2 UvrA and 2 UvrB subunits scans DNA for abnormalities. Upon binding of the UvrA(2)B(2) complex to a putative damaged site, the DNA wraps around one UvrB monomer. DNA wrap is dependent on ATP binding by UvrB and probably causes local melting of the DNA helix, facilitating insertion of UvrB beta-hairpin between the DNA strands. Then UvrB probes one DNA strand for the presence of a lesion. If a lesion is found the UvrA subunits dissociate and the UvrB-DNA preincision complex is formed. This complex is subsequently bound by UvrC and the second UvrB is released. If no lesion is found, the DNA wraps around the other UvrB subunit that will check the other stand for damage. The chain is UvrABC system protein B from Helicobacter pylori (strain HPAG1).